A 766-amino-acid chain; its full sequence is Serine/threonine-protein kinase B-raf (766 aa).

A compositionally biased stretch (gly residues) spans 1 to 13; that stretch reads MAALSGGGGGGAE. The disordered stretch occupies residues 1-38; sequence MAALSGGGGGGAEPGQALFNGDMEPEAGAGAGAAASSA. Position 2 is an N-acetylalanine (Ala-2). Ser-151 is subject to Phosphoserine. Residues 155-227 enclose the RBD domain; that stretch reads PIVRVFLPNK…TGEELHVEVL (73 aa). The Phorbol-ester/DAG-type zinc finger occupies 234-280; it reads THNFVRKTFFTLAFCDFCRKLLFQGFRCQTCGYKFHQRCSTEVPLMC. 8 residues coordinate Zn(2+): His-235, Cys-248, Cys-251, Cys-261, Cys-264, His-269, Cys-272, and Cys-280. The tract at residues 308–454 is disordered; that stretch reads AETALTSGSS…DSSDDWEIPD (147 aa). Low complexity predominate over residues 314 to 341; the sequence is SGSSPSAPASDSIGPQILTSPSPSKSIP. Phosphoserine is present on Ser-333. The segment covering 348–363 has biased composition (basic and acidic residues); sequence PADEDHRNQFGQRDRS. Ser-365 bears the Phosphoserine; by SGK1 mark. Thr-373 bears the Phosphothreonine; by autocatalysis mark. Thr-396 carries the phosphothreonine modification. At Ser-399 the chain carries Phosphoserine. The residue at position 401 (Thr-401) is a Phosphothreonine. Positions 423 to 447 are enriched in basic and acidic residues; that stretch reads QRERKSSSSSEDRNRMKTLGRRDSS. Phosphoserine occurs at positions 446 and 447. Positions 457–717 constitute a Protein kinase domain; it reads ITVGQRIGSG…PQILASIELL (261 aa). ATP is bound by residues 463 to 471 and Lys-483; that span reads IGSGSFGTV. Catalysis depends on Asp-576, which acts as the Proton acceptor. Residue Lys-578 forms a Glycyl lysine isopeptide (Lys-Gly) (interchain with G-Cter in ubiquitin) linkage. An Omega-N-methylarginine; by PRMT5 modification is found at Arg-671. 2 positions are modified to phosphoserine: Ser-729 and Ser-750. Thr-753 is subject to Phosphothreonine; by MAPK1.

Belongs to the protein kinase superfamily. TKL Ser/Thr protein kinase family. RAF subfamily. As to quaternary structure, monomer. Homodimer. Heterodimerizes with RAF1, and the heterodimer possesses a highly increased kinase activity compared to the respective homodimers or monomers. Heterodimerization is mitogen-regulated and enhanced by 14-3-3 proteins. MAPK1/ERK2 activation can induce a negative feedback that promotes the dissociation of the heterodimer by phosphorylating BRAF at Thr-753. Heterodimerizes (via N-terminus) with KSR1 (via N-terminus) or KSR2 (via N-terminus) in a MAP2K1-dependent manner. Interacts with MAP2K1 and MAP2K2. Found in a complex with at least BRAF, HRAS, MAP2K1, MAPK3 and RGS14. Interacts with RIT1. Interacts (via N-terminus) with RGS14 (via RBD domains); the interaction mediates the formation of a ternary complex with RAF1, a ternary complex inhibited by GNAI1. Interacts with DGKH. Interacts with PRMT5. Interacts with KSR2. Interacts with AKAP13, MAP2K1 and KSR1. Identified in a complex with AKAP13, MAP2K1 and KSR1. Interacts with FNIP1 and FNIP2. The cofactor is Zn(2+). In terms of processing, phosphorylation at Ser-365 by SGK1 inhibits its activity. Phosphorylation at Thr-753 by MAPK1. Dephosphorylation of Ser-365 by the SHOC2-MRAS-PP1c (SMP) complex consisting of SHOC2, GTP-bound M-Ras/MRAS and the catalytic subunit of protein phosphatase 1 (PPP1CA, PPP1CB or PPP1CC); this relieves inactivation and stimulates kinase activity. Post-translationally, methylation at Arg-671 decreases stability and kinase activity. Ubiquitinated by RNF149; which leads to proteasomal degradation. Polyubiquitinated at Lys-578 in response to EGF. As to expression, brain and testis.

The protein resides in the nucleus. It localises to the cytoplasm. The protein localises to the cell membrane. The catalysed reaction is L-seryl-[protein] + ATP = O-phospho-L-seryl-[protein] + ADP + H(+). It catalyses the reaction L-threonyl-[protein] + ATP = O-phospho-L-threonyl-[protein] + ADP + H(+). In quiescent cells, maintained in an inactive state via an intramolecular interaction between the protein kinase and N-terminal domains. Following mitogen-mediated cell activation, binds via its RGB domain to active HRAS (GTP-bound) which releases the inhibitory intramolecular interaction between the two domains. This allows the MAP2K1-mediated dimerization of KSR1 or KSR2, and BRAF which activates BRAF. In terms of biological role, protein kinase involved in the transduction of mitogenic signals from the cell membrane to the nucleus. Phosphorylates MAP2K1, and thereby activates the MAP kinase signal transduction pathway. Phosphorylates PFKFB2. May play a role in the postsynaptic responses of hippocampal neurons. This Homo sapiens (Human) protein is Serine/threonine-protein kinase B-raf.